A 589-amino-acid polypeptide reads, in one-letter code: Ubiquilin-1 (589 aa).

Gly residues predominate over residues 1–11 (MAESGESGGPP). 2 disordered regions span residues 1–35 (MAES…AEPK) and 110–145 (NRPQ…ATSN). Ala2 carries the N-acetylalanine modification. The span at 12-35 (GSQDSAAGAEGAGAPAAAASAEPK) shows a compositional bias: low complexity. In terms of domain architecture, Ubiquitin-like spans 37–111 (MKVTVKTPKE…VHLVIKTQNR (75 aa)). Residues 110–124 (NRPQDHSAQQTNTAG) show a composition bias toward polar residues. Over residues 125–145 (SNVTTSSTPNSNSTSGSATSN) the composition is skewed to low complexity. Residues 178–428 (QLLSNPEMMV…LNNPLFAGNP (251 aa)) form an interaction with UBXN4 region. STI1 domains are found at residues 182-210 (NPEM…QLIM) and 212-251 (NPQM…MQEM). Residues 295 to 371 (PFASLVSNTS…NLVPGVGASM (77 aa)) form a disordered region. Over residues 299–313 (LVSNTSSGEGSQPSR) the composition is skewed to polar residues. Residues 327 to 360 (QTSQSSSASSGTASTVGGTTGSTASGTSGQSTTA) are compositionally biased toward low complexity. STI1 domains follow at residues 387-434 (NPQL…QEQM) and 438-470 (LPTF…QQGL). Residues 488–520 (LGALGSTGGSSGTNGSNATPSENTSPTAGTTEP) are disordered. Positions 489–499 (GALGSTGGSSG) are enriched in gly residues. The span at 509–520 (ENTSPTAGTTEP) shows a compositional bias: polar residues. The UBA domain maps to 546-586 (RFQQQLEQLSAMGFLNREANLQALIATGGDINAAIERLLGS).

As to quaternary structure, monomer and homodimer. Heterodimer with UBQLN2. Binds CD47, NBL1, GABRA1, GABRA2, GABRA3, GABRA6, GABRB1, GABRB2 and GABRB3. Binds UBE3A, BTRC, P4HB and MTOR. Interacts with the proteasome 19S subunit. Interacts (via ubiquitin-like domain) with TREX1; the interaction is direct and may control TREX1 subcellular location. Forms a complex with UBXN4 and VCP. Interacts (via UBA domain) with UBQLN4 (via ubiquitin-like domain). Found in a complex with UBQLN2 and MAP1LC3A/B/C. The monomeric form interacts with PSEN2. The monomeric form interacts with PSEN1. Interacts with ORAI1. Interacts (via UBA domain) with TICAM1. Interacts with EPS15. Interacts (via UBA domain) with UBA52 and (via ubiquitin-like domain) with PSMD3 and PSMD4. Interacts with HERPUD1. Interacts with MAP1LC3A/B/C in the presence of UBQLN4. Interacts (via ubiquitin-like domain) with EPS15 (via UIM domains) and both the ubiquitinated and non-ubiquitinated forms can interact with EPS15. Interacts (via ubiquitin-like domain) with EPS15L1, HGS (via UIM domain) and STAM2 (via UIM domain). Interacts with BCL2L10/BCL-B; in the cytoplasm. In terms of assembly, monomeric form interacts with PSEN1. Degraded during both macroautophagy and during chaperone-mediated autophagy (CMA). In terms of processing, phosphorylated. Post-translationally, ubiquitinated. Brain (at protein level). Ubiquitous. Highly expressed throughout the brain; detected in neurons and in neuropathological lesions, such as neurofibrillary tangles and Lewy bodies. Highly expressed in heart, placenta, pancreas, lung, liver, skeletal muscle and kidney.

It localises to the cytoplasm. It is found in the nucleus. The protein resides in the endoplasmic reticulum. The protein localises to the cytoplasmic vesicle. Its subcellular location is the autophagosome. It localises to the cell membrane. Functionally, plays an important role in the regulation of different protein degradation mechanisms and pathways including ubiquitin-proteasome system (UPS), autophagy and endoplasmic reticulum-associated protein degradation (ERAD) pathway. Mediates the proteasomal targeting of misfolded or accumulated proteins for degradation by binding (via UBA domain) to their polyubiquitin chains and by interacting (via ubiquitin-like domain) with the subunits of the proteasome. Plays a role in the ERAD pathway via its interaction with ER-localized proteins UBXN4, VCP and HERPUD1 and may form a link between the polyubiquitinated ERAD substrates and the proteasome. Involved in the regulation of macroautophagy and autophagosome formation; required for maturation of autophagy-related protein LC3 from the cytosolic form LC3-I to the membrane-bound form LC3-II and may assist in the maturation of autophagosomes to autolysosomes by mediating autophagosome-lysosome fusion. Negatively regulates the TICAM1/TRIF-dependent toll-like receptor signaling pathway by decreasing the abundance of TICAM1 via the autophagic pathway. Promotes the ubiquitination and lysosomal degradation of ORAI1, consequently down-regulating the ORAI1-mediated Ca2+ mobilization. Suppresses the maturation and proteasomal degradation of amyloid beta A4 protein (A4) by stimulating the lysine 63 (K63)-linked polyubiquitination. Delays the maturation of A4 by sequestering it in the Golgi apparatus and preventing its transport to the cell surface for subsequent processing. Ubiquitinates BCL2L10 and thereby stabilizes protein abundance. In terms of biological role, plays a role in unfolded protein response (UPR) by attenuating the induction of UPR-inducible genes, DDTI3/CHOP, HSPA5 and PDIA2 during ER stress. Plays a key role in the regulation of the levels of PSEN1 by targeting its accumulation to aggresomes which may then be removed from cells by autophagocytosis. Plays a role in unfolded protein response (UPR) by attenuating the induction of UPR-inducible genes, DDTI3/CHOP, HSPA5 and PDIA2 during ER stress. This Homo sapiens (Human) protein is Ubiquilin-1 (UBQLN1).